We begin with the raw amino-acid sequence, 456 residues long: MATAYIIGLGRSGIAAAKCLKQDGWEVIISDCATSPNLIPLQQQLHAEGITVKLGHTPNLNASDLPELIVVSPGVPWDTPFLIEARERQIDTIGELELAWRYLQSSPWVGITGTNGKTTTTALVAAIFQGAKLNAPSCGNIGYAACELALSKLKKDNTSNYDWIIAEISSYQCESSQELSPKIGLWTTFTADHLSRHKTLDNYYAIKASLLYRSEYQIFNGDDPYLHQTGLHQWADAYWTTVKGKDNLLCDPSQGVYIQDNWVVAFGELILPLNLFKMPGFHNQQNLLMAIAAARLAGIEKGAIASAIATFTGVPHRLEYIRTVDGIDFINDSKATNYDAAEVGLLSVQSPTILIAGGEEKEGDDKKWIAQIKSKVIKVLLIGEAAENFAKRLHDCDYHDYEIVETMDKAIERSLILGQELKAKVILLSPACASFDQYQSFEHRGEHFRELCQKLI.

An ATP-binding site is contributed by 113–119 (GTNGKTT).

This sequence belongs to the MurCDEF family.

It is found in the cytoplasm. It carries out the reaction UDP-N-acetyl-alpha-D-muramoyl-L-alanine + D-glutamate + ATP = UDP-N-acetyl-alpha-D-muramoyl-L-alanyl-D-glutamate + ADP + phosphate + H(+). It functions in the pathway cell wall biogenesis; peptidoglycan biosynthesis. Functionally, cell wall formation. Catalyzes the addition of glutamate to the nucleotide precursor UDP-N-acetylmuramoyl-L-alanine (UMA). This Crocosphaera subtropica (strain ATCC 51142 / BH68) (Cyanothece sp. (strain ATCC 51142)) protein is UDP-N-acetylmuramoylalanine--D-glutamate ligase.